Consider the following 133-residue polypeptide: MYSWYFPKDSPSTGLGHRHDWEHVIVWIDNPEIAEPKILAVTPSAHSGYSAQVPPDADKVEGTSVKVNYESKWPINHALGSTTKGGDYQDLIMWEQLTDAARLALENTDFGKANVPMKDGNFVGKLNKAWPFD.

The Conserved undecapeptide motifI I motif lies at 1–9 (MYSWYFPKD). The Hepta-peptide GHRHDWE motif II signature appears at 16–22 (GHRHDWE).

The protein belongs to the Necrosis inducing protein (NPP1) family.

It localises to the secreted. In terms of biological role, secreted effector that contributes strongly to virulence during infection by P.capsici. Causes large necrotic areas in both host C.annuum and non-host N.benthamiana. The chain is NLP effector protein 14 from Phytophthora capsici.